The following is a 309-amino-acid chain: Protein FdhE homolog (309 aa).

It belongs to the FdhE family.

It is found in the cytoplasm. Functionally, necessary for formate dehydrogenase activity. The protein is Protein FdhE homolog of Yersinia pestis bv. Antiqua (strain Antiqua).